The chain runs to 350 residues: Ribosomal RNA large subunit methyltransferase M (350 aa).

Residues S184, 217 to 220, D236, D256, and D272 each bind S-adenosyl-L-methionine; that span reads APGG. The active-site Proton acceptor is K301.

This sequence belongs to the class I-like SAM-binding methyltransferase superfamily. RNA methyltransferase RlmE family. RlmM subfamily. In terms of assembly, monomer.

The protein resides in the cytoplasm. The enzyme catalyses cytidine(2498) in 23S rRNA + S-adenosyl-L-methionine = 2'-O-methylcytidine(2498) in 23S rRNA + S-adenosyl-L-homocysteine + H(+). Functionally, catalyzes the 2'-O-methylation at nucleotide C2498 in 23S rRNA. This chain is Ribosomal RNA large subunit methyltransferase M, found in Marinomonas sp. (strain MWYL1).